The chain runs to 480 residues: MQETSIKRAGASAAASAAPAATVPATASASARKLYIRTFGCQMNEYDSDKMADVLRGDQGLELTDNPEDADVILFNTCSVREKAQEKVFSDLGRVQHLKKLNPDLVIGVGGCVASQEGEAIVKRAPYVDVVFGPQTLHRLPELIRRRRASGASQVDISFPEIEKFDALPPPRIEGATAFVSIMEGCSKYCSFCVVPYTRGEEVSRPFDDVLVEVADLADQGVKEVTLLGQNVNAYRGPMGDTGEIADFATLLEYVHEIPGIERIRYTTSHPKEMTQRMVDAYANLPKLVSFLHLPVQAGSDRVLAAMKRGYTTLEFKSVVRRLRAARPGLTLSSDFIVGFPGETEEDFDKTMKLIEDVGFDTSFSFIYSRRPGTPAADLVDDTPQEVKLRRLQQLQALINAQAAAIAQAMVGTRQRLLVEGPSRRDPNELMGRTENNRIVNFPAPARLIGQMVDVIITDAYPNSLRARVADVDGLAQGNA.

Residues arginine 32–alanine 149 form the MTTase N-terminal domain. [4Fe-4S] cluster-binding residues include cysteine 41, cysteine 78, cysteine 112, cysteine 186, cysteine 190, and cysteine 193. The region spanning arginine 172–alanine 405 is the Radical SAM core domain. Residues glutamine 408–aspartate 471 form the TRAM domain.

It belongs to the methylthiotransferase family. MiaB subfamily. As to quaternary structure, monomer. It depends on [4Fe-4S] cluster as a cofactor.

It is found in the cytoplasm. The enzyme catalyses N(6)-dimethylallyladenosine(37) in tRNA + (sulfur carrier)-SH + AH2 + 2 S-adenosyl-L-methionine = 2-methylsulfanyl-N(6)-dimethylallyladenosine(37) in tRNA + (sulfur carrier)-H + 5'-deoxyadenosine + L-methionine + A + S-adenosyl-L-homocysteine + 2 H(+). Functionally, catalyzes the methylthiolation of N6-(dimethylallyl)adenosine (i(6)A), leading to the formation of 2-methylthio-N6-(dimethylallyl)adenosine (ms(2)i(6)A) at position 37 in tRNAs that read codons beginning with uridine. The protein is tRNA-2-methylthio-N(6)-dimethylallyladenosine synthase of Bordetella petrii (strain ATCC BAA-461 / DSM 12804 / CCUG 43448).